Consider the following 87-residue polypeptide: Small cysteine-rich outer membrane protein omcA (87 aa).

An N-terminal signal peptide occupies residues 1–19; the sequence is MKKAVLLATVFCGVVGLTS. Cysteine 20 carries the N-palmitoyl cysteine lipid modification. Cysteine 20 carries S-diacylglycerol cysteine lipidation.

In terms of assembly, part of a disulfide cross-linked outer membrane complex (COMC) composed of the major outer membrane porin (MOMP), the small cysteine-rich protein (omcA) and the large cysteine-rich periplasmic protein (omcB). In terms of processing, N-terminal amide-linked and S-diacylglycerol cysteine-linked to 16:0, 18:0, 15:0 branched, and 17:0 branched fatty acids (ratio 6:5:3:4) in the EB stage. The exact distribution of fatty acids has not been determined. The N-terminus is blocked.

It is found in the cell outer membrane. Functionally, in elementary bodies (EBs, the infectious stage, which is able to survive outside the host cell) provides the structural integrity of the outer envelope through disulfide cross-links with the large cysteine-rich periplasmic protein and the major outer membrane porin. It has been described in publications as the Sarkosyl-insoluble COMC (Chlamydia outer membrane complex), and serves as the functional equivalent of peptidoglycan. The chain is Small cysteine-rich outer membrane protein omcA (omcA) from Chlamydia psittaci (Chlamydophila psittaci).